The primary structure comprises 470 residues: E3 SUMO-protein ligase EGR2 (470 aa).

Residues Pro-126–Pro-141 are compositionally biased toward low complexity. 3 disordered regions span residues Pro-126–Thr-153, Pro-159–Thr-178, and Pro-185–Ser-210. The span at Ser-190–Tyr-202 shows a compositional bias: low complexity. Lys-247 is subject to N6-acetyllysine; by EP300. Positions Gly-275–Gly-291 are enriched in gly residues. The tract at residues Gly-275–Asp-345 is disordered. 3 consecutive C2H2-type zinc fingers follow at residues Tyr-337–His-361, Phe-367–His-389, and Phe-395–His-417. The segment at Asp-408–Pro-470 is disordered. Basic residues predominate over residues Arg-412–Glu-422. A compositionally biased stretch (low complexity) spans Ser-426–Ser-439. Residues Gly-440–Leu-450 are compositionally biased toward gly residues.

This sequence belongs to the EGR C2H2-type zinc-finger protein family. As to quaternary structure, interacts with HCFC1. Interacts with WWP2. Interacts with UBC9. Interacts with CITED1. Interacts (via phosphorylated form) with SFN. Ubiquitinated by WWP2 leading to proteasomal degradation. Post-translationally, acetylated at Lys-247. May be deacetylated by HDAC6, HDAC10 or SIRT1. In terms of tissue distribution, expressed mainly in the thymus.

The protein resides in the nucleus. The protein operates within protein modification; protein sumoylation. Functionally, sequence-specific DNA-binding transcription factor. Plays a role in hindbrain segmentation by regulating the expression of a subset of homeobox containing genes and in Schwann cell myelination by regulating the expression of genes involved in the formation and maintenance of myelin. Binds to two EGR2-consensus sites EGR2A (5'-CTGTAGGAG-3') and EGR2B (5'-ATGTAGGTG-3') in the HOXB3 enhancer and promotes HOXB3 transcriptional activation. Binds to specific DNA sites located in the promoter region of HOXA4, HOXB2 and ERBB2. Regulates hindbrain segmentation by controlling the expression of Hox genes, such as HOXA4, HOXB3 and HOXB2, and thereby specifying odd and even rhombomeres. Promotes the expression of HOXB3 in the rhombomere r5 and of HOXB3 in r3 and r5 in the hindbrain. Regulates myelination in the peripheral nervous system after birth, possibly by regulating the expression of myelin proteins, such as MPZ, and by promoting the differentiation of Schwann cells. Involved in the development of the jaw openener musculature, probably by playing a role in its innervation through trigeminal motor neurons. May play a role in adipogenesis, possibly by regulating the expression of CEBPB. Its function is as follows. E3 SUMO-protein ligase helping SUMO1 conjugation to its coregulators NAB1 and NAB2, whose sumoylation down-regulates EGR2 transcriptional activity. The polypeptide is E3 SUMO-protein ligase EGR2 (Egr2) (Mus musculus (Mouse)).